Reading from the N-terminus, the 414-residue chain is Serine hydroxymethyltransferase (414 aa).

Residues leucine 118 and 122-124 (GHL) contribute to the (6S)-5,6,7,8-tetrahydrofolate site. An N6-(pyridoxal phosphate)lysine modification is found at lysine 226. 353–355 (SPF) lines the (6S)-5,6,7,8-tetrahydrofolate pocket.

This sequence belongs to the SHMT family. In terms of assembly, homodimer. Requires pyridoxal 5'-phosphate as cofactor.

The protein resides in the cytoplasm. It catalyses the reaction (6R)-5,10-methylene-5,6,7,8-tetrahydrofolate + glycine + H2O = (6S)-5,6,7,8-tetrahydrofolate + L-serine. It functions in the pathway one-carbon metabolism; tetrahydrofolate interconversion. It participates in amino-acid biosynthesis; glycine biosynthesis; glycine from L-serine: step 1/1. Its function is as follows. Catalyzes the reversible interconversion of serine and glycine with tetrahydrofolate (THF) serving as the one-carbon carrier. This reaction serves as the major source of one-carbon groups required for the biosynthesis of purines, thymidylate, methionine, and other important biomolecules. Also exhibits THF-independent aldolase activity toward beta-hydroxyamino acids, producing glycine and aldehydes, via a retro-aldol mechanism. This is Serine hydroxymethyltransferase from Blochmanniella floridana.